A 715-amino-acid polypeptide reads, in one-letter code: Fatty acid oxidation complex subunit alpha (715 aa).

Positions 1–190 (MIYEGKAITV…KVGAVDAVVA (190 aa)) are enoyl-CoA hydratase/isomerase. Aspartate 297 contributes to the substrate binding site. The segment at 312-715 (HDVKQAAVLG…MAKNGQRFFN (404 aa)) is 3-hydroxyacyl-CoA dehydrogenase. NAD(+) contacts are provided by residues methionine 325, aspartate 344, 401–403 (VVE), lysine 408, and serine 430. Histidine 451 serves as the catalytic For 3-hydroxyacyl-CoA dehydrogenase activity. Asparagine 454 contacts NAD(+). Residues asparagine 501 and tyrosine 660 each coordinate substrate.

It in the N-terminal section; belongs to the enoyl-CoA hydratase/isomerase family. In the C-terminal section; belongs to the 3-hydroxyacyl-CoA dehydrogenase family. Heterotetramer of two alpha chains (FadB) and two beta chains (FadA).

The catalysed reaction is a (3S)-3-hydroxyacyl-CoA + NAD(+) = a 3-oxoacyl-CoA + NADH + H(+). It carries out the reaction a (3S)-3-hydroxyacyl-CoA = a (2E)-enoyl-CoA + H2O. The enzyme catalyses a 4-saturated-(3S)-3-hydroxyacyl-CoA = a (3E)-enoyl-CoA + H2O. It catalyses the reaction (3S)-3-hydroxybutanoyl-CoA = (3R)-3-hydroxybutanoyl-CoA. The catalysed reaction is a (3Z)-enoyl-CoA = a 4-saturated (2E)-enoyl-CoA. It carries out the reaction a (3E)-enoyl-CoA = a 4-saturated (2E)-enoyl-CoA. The protein operates within lipid metabolism; fatty acid beta-oxidation. Involved in the aerobic and anaerobic degradation of long-chain fatty acids via beta-oxidation cycle. Catalyzes the formation of 3-oxoacyl-CoA from enoyl-CoA via L-3-hydroxyacyl-CoA. It can also use D-3-hydroxyacyl-CoA and cis-3-enoyl-CoA as substrate. The sequence is that of Fatty acid oxidation complex subunit alpha from Pseudomonas putida (strain GB-1).